We begin with the raw amino-acid sequence, 258 residues long: 5'-nucleotidase SurE (258 aa).

Residues aspartate 9, aspartate 10, serine 42, and asparagine 96 each coordinate a divalent metal cation.

This sequence belongs to the SurE nucleotidase family. A divalent metal cation is required as a cofactor.

It is found in the cytoplasm. It catalyses the reaction a ribonucleoside 5'-phosphate + H2O = a ribonucleoside + phosphate. In terms of biological role, nucleotidase that shows phosphatase activity on nucleoside 5'-monophosphates. The sequence is that of 5'-nucleotidase SurE from Campylobacter jejuni subsp. jejuni serotype O:2 (strain ATCC 700819 / NCTC 11168).